The chain runs to 558 residues: Oxygen-dependent choline dehydrogenase (558 aa).

8–37 (DYIIIGAGSAGNVLATRLTEDSDVSVLLLE) is a binding site for FAD. His475 functions as the Proton acceptor in the catalytic mechanism.

The protein belongs to the GMC oxidoreductase family. The cofactor is FAD.

It carries out the reaction choline + A = betaine aldehyde + AH2. The enzyme catalyses betaine aldehyde + NAD(+) + H2O = glycine betaine + NADH + 2 H(+). It participates in amine and polyamine biosynthesis; betaine biosynthesis via choline pathway; betaine aldehyde from choline (cytochrome c reductase route): step 1/1. Its function is as follows. Involved in the biosynthesis of the osmoprotectant glycine betaine. Catalyzes the oxidation of choline to betaine aldehyde and betaine aldehyde to glycine betaine at the same rate. The polypeptide is Oxygen-dependent choline dehydrogenase (Chromohalobacter salexigens (strain ATCC BAA-138 / DSM 3043 / CIP 106854 / NCIMB 13768 / 1H11)).